The chain runs to 799 residues: Elongation factor G, mitochondrial (799 aa).

Residues 1-34 constitute a mitochondrion transit peptide; sequence MRCPSLTRLPYRAVSGLPRSVVRLQSQNFLTRRC. Residues 97–384 enclose the tr-type G domain; sequence SRVRNIGIAA…GVVDYLPNPA (288 aa). GTP-binding positions include 106 to 113, 182 to 186, and 236 to 239; these read AHIDSGKT, DTPGH, and NKMD.

It belongs to the TRAFAC class translation factor GTPase superfamily. Classic translation factor GTPase family. EF-G/EF-2 subfamily.

The protein localises to the mitochondrion. The protein operates within protein biosynthesis; polypeptide chain elongation. In terms of biological role, mitochondrial GTPase that catalyzes the GTP-dependent ribosomal translocation step during translation elongation. During this step, the ribosome changes from the pre-translocational (PRE) to the post-translocational (POST) state as the newly formed A-site-bound peptidyl-tRNA and P-site-bound deacylated tRNA move to the P and E sites, respectively. Catalyzes the coordinated movement of the two tRNA molecules, the mRNA and conformational changes in the ribosome. In Aspergillus flavus (strain ATCC 200026 / FGSC A1120 / IAM 13836 / NRRL 3357 / JCM 12722 / SRRC 167), this protein is Elongation factor G, mitochondrial (mef1).